Reading from the N-terminus, the 280-residue chain is Thioredoxin-related transmembrane protein 1 (280 aa).

The signal sequence occupies residues 1–26; sequence MAPSGSLAVPLAVLVLLLWGAPWTHG. In terms of domain architecture, Thioredoxin spans 27–132; sequence RRSNVRVITD…FINFISDKEW (106 aa). At 27–180 the chain is on the extracellular side; that stretch reads RRSNVRVITD…EDLGLPVWGS (154 aa). Residues Cys-56 and Cys-59 each act as nucleophile in the active site. Cys-56 and Cys-59 form a disulfide bridge. Residues 181–203 traverse the membrane as a helical segment; that stretch reads YTVFALATLFSGLLLGLCMIFVA. The Cytoplasmic portion of the chain corresponds to 204 to 280; that stretch reads DCLCPSKRRR…LGPSLATDKS (77 aa). S-palmitoyl cysteine attachment occurs at residues Cys-205 and Cys-207. The tract at residues 218-280 is disordered; it reads PYPSKKLLSE…LGPSLATDKS (63 aa). Phosphoserine occurs at positions 228, 247, 270, 274, and 280. Over residues 237–252 the composition is skewed to acidic residues; that stretch reads EEQEADEEDVSEEEAE.

Interacts with ATP2A2. Post-translationally, palmitoylated; palmitoylation is required for localization to mitochondria-associated endoplasmic reticulum membrane (MAM). As to expression, ubiquitous. Highly expressed in kidney, liver, placenta and lung.

The protein localises to the endoplasmic reticulum membrane. The protein resides in the mitochondrion membrane. It localises to the secreted. It carries out the reaction Catalyzes the rearrangement of -S-S- bonds in proteins.. Thiredoxin domain-containing protein that participates in various redox reactions through the reversible oxidation of its active center dithiol to a disulfide and catalyze dithiol-disulfide exchange reactions. Acts as a key inhibitor of the alternative triglyceride biosynthesis pathway by inhibiting the activity of TMEM68/DIESL at the endoplasmic reticulum, thereby restricting accumulation of triacylglycerol. The alternative triglyceride biosynthesis pathway mediates formation of triacylglycerol from diacylglycerol and membrane phospholipids. Acts as a protein disulfide isomerase by catalyzing formation or reduction of disulfide bonds. Specifically mediates formation of disulfide bonds of transmembrane proteins at the endoplasmic reticulum membrane. Involved in endoplasmic reticulum-associated degradation (ERAD) via its protein disulfide isomerase activity by acting on folding-defective polypeptides at the endoplasmic reticulum membrane. Acts as a negative regulator of platelet aggregation following secretion in the extracellular space. Acts as a regulator of endoplasmic reticulum-mitochondria contact sites via its ability to regulate redox signals. Regulates endoplasmic reticulum-mitochondria Ca(2+) flux. The protein is Thioredoxin-related transmembrane protein 1 of Homo sapiens (Human).